Reading from the N-terminus, the 596-residue chain is Potassium-transporting ATPase potassium-binding subunit (596 aa).

A run of 10 helical transmembrane segments spans residues 6–26, 67–87, 136–156, 177–197, 283–303, 314–334, 413–433, 450–470, 518–538, and 560–580; these read ILTIVLYVGVLLLLAYPLGGF, AIGLIAFNILGVLFVFGLQLF, GLTTQNFLSAASGIVVVIALI, ITLYVLVPISVVYAIFLVGQG, LSNFIQILSIFLIPAALCFTF, WVVLVTMILIFLTVTFAAVHF, GLYGMLVFAILAVFIAGLMIG, MVAIAILVTPILALVGTAIAV, MLAIAMWFGRFGVIVPVLALA, and LFIVLLAGTVILVGALNYVPA.

The protein belongs to the KdpA family. In terms of assembly, the system is composed of three essential subunits: KdpA, KdpB and KdpC.

It is found in the cell inner membrane. Functionally, part of the high-affinity ATP-driven potassium transport (or Kdp) system, which catalyzes the hydrolysis of ATP coupled with the electrogenic transport of potassium into the cytoplasm. This subunit binds the periplasmic potassium ions and delivers the ions to the membrane domain of KdpB through an intramembrane tunnel. The polypeptide is Potassium-transporting ATPase potassium-binding subunit (Polynucleobacter asymbioticus (strain DSM 18221 / CIP 109841 / QLW-P1DMWA-1) (Polynucleobacter necessarius subsp. asymbioticus)).